The primary structure comprises 265 residues: Homeobox protein Nkx-6.3 (265 aa).

The segment at residues 139-198 is a DNA-binding region (homeobox); it reads KKHTRPTFTGHQIFALEKTFEQTKYLAGPERARLAYSLGMTESQVKVWFQNRRTKWRKKS. Residues 196–240 are disordered; it reads KKSALEPSSSTPRAPGGAGAGAGGDRAPSENEDDEYNKPLDPDSD.

The protein resides in the nucleus. Functionally, putative transcription factor, which may be involved in patterning of central nervous system and pancreas. The chain is Homeobox protein Nkx-6.3 (NKX6-3) from Homo sapiens (Human).